We begin with the raw amino-acid sequence, 132 residues long: Small ribosomal subunit protein uS8 (132 aa).

Belongs to the universal ribosomal protein uS8 family. As to quaternary structure, part of the 30S ribosomal subunit. Contacts proteins S5 and S12.

One of the primary rRNA binding proteins, it binds directly to 16S rRNA central domain where it helps coordinate assembly of the platform of the 30S subunit. The chain is Small ribosomal subunit protein uS8 from Gluconacetobacter diazotrophicus (strain ATCC 49037 / DSM 5601 / CCUG 37298 / CIP 103539 / LMG 7603 / PAl5).